We begin with the raw amino-acid sequence, 59 residues long: MDEKNPEAVPRPPEQNTELVPPKKSKSKKPANILIYLIDRHLGRPRNDMDLFEWVWTLK.

The interval 1–28 (MDEKNPEAVPRPPEQNTELVPPKKSKSK) is disordered.

As to expression, specifically expressed in testis.

The protein is Embryonic testis differentiation protein of Mus musculus (Mouse).